The sequence spans 447 residues: uncharacterized protein (447 aa).

Positions 87, 93, 96, and 162 each coordinate [4Fe-4S] cluster. S-adenosyl-L-methionine contacts are provided by Q284, Y313, E334, and D375. Residue C402 is the Nucleophile of the active site.

The protein belongs to the class I-like SAM-binding methyltransferase superfamily. RNA M5U methyltransferase family.

This is an uncharacterized protein from Nanoarchaeum equitans (strain Kin4-M).